A 1547-amino-acid polypeptide reads, in one-letter code: ABC multidrug transporter atrF (1547 aa).

Disordered regions lie at residues 1 to 66 (MADG…RRGA) and 85 to 123 (TRSVGKDAHRLRSRASGRASQVHDEEKAIDEEDSTIDGD). Residues 10–19 (SATSTTMETN) show a composition bias toward polar residues. Low complexity predominate over residues 36-47 (SSSMTATSSELS). Over residues 51 to 66 (RWGERDQGEPVSRRGA) the composition is skewed to basic and acidic residues. Over residues 111-123 (KAIDEEDSTIDGD) the composition is skewed to acidic residues. An ABC transporter 1 domain is found at 197–439 (IPQLRFGKQP…FVNLGFHCPE (243 aa)). N-linked (GlcNAc...) asparagine glycosylation is found at Asn-299 and Asn-363. 7 helical membrane-spanning segments follow: residues 552–572 (LYTKYFIIISNALIVSSLFYG), 586–606 (ALFFSILFLGWLQLTELMPAV), 635–655 (FPAIFCMVVPFTIIMYFMTGL), 657–677 (VTASKFFIYFLFVYTTTFSIT), 698–718 (GIALNILVIFVGYVIPKQGLI), 722–742 (IWFGWLFYVNPIAYSYEAVLT), and 804–824 (FGVVIAFTVLYLIVTVLAAEF). The 239-residue stretch at 892–1130 (FTWSNVEYTV…DVIKYFADRG (239 aa)) folds into the ABC transporter 2 domain. The N-linked (GlcNAc...) asparagine glycan is linked to Asn-905. 928–935 (GASGAGKT) provides a ligand contact to ATP. N-linked (GlcNAc...) asparagine glycosylation is found at Asn-980 and Asn-999. 8 consecutive transmembrane segments (helical) span residues 1230-1250 (FVSVIIGIFNGFTFWMLGNSI), 1260-1280 (IFLIIMIPPVVLNSIVPKFYI), 1309-1329 (IPMAIVSSLIYWLLWYYPVGF), 1334-1354 (STAGYVFLMSMLFFLFMSSWG), 1356-1376 (WICAFAPSFTVISNVLPFFFV), 1397-1417 (YWMYYVNPVTWWLRGVISSIF), 1491-1511 (CFGIFLAFVIINWLLVYFFIY), and 1520-1540 (FGMGYLFGGMGLVIDKVKGVF).

It belongs to the ABC transporter superfamily. ABCG family. PDR (TC 3.A.1.205) subfamily.

Its subcellular location is the cell membrane. The enzyme catalyses voriconazole(in) + ATP + H2O = voriconazole(out) + ADP + phosphate + H(+). The catalysed reaction is fluconazole(in) + ATP + H2O = fluconazole(out) + ADP + phosphate + H(+). Its function is as follows. Pleiotropic ABC efflux transporter involved in the basal level of azole susceptibility. Confers resistance to fluconazole and voriconazole. The sequence is that of ABC multidrug transporter atrF from Aspergillus fumigatus (strain ATCC MYA-4609 / CBS 101355 / FGSC A1100 / Af293) (Neosartorya fumigata).